Consider the following 138-residue polypeptide: Large ribosomal subunit protein uL16 (138 aa).

It belongs to the universal ribosomal protein uL16 family. Part of the 50S ribosomal subunit.

Functionally, binds 23S rRNA and is also seen to make contacts with the A and possibly P site tRNAs. The polypeptide is Large ribosomal subunit protein uL16 (Neisseria gonorrhoeae (strain ATCC 700825 / FA 1090)).